We begin with the raw amino-acid sequence, 226 residues long: Ribonuclease 3 (226 aa).

One can recognise an RNase III domain in the interval 6–128; that stretch reads VNQLQKKLGY…LIGAIFLDSD (123 aa). E41 contributes to the Mg(2+) binding site. The active site involves D45. 2 residues coordinate Mg(2+): D114 and E117. E117 is an active-site residue. The DRBM domain maps to 155–225; sequence DPKTRLQEYL…AEQALIQLEL (71 aa).

The protein belongs to the ribonuclease III family. Homodimer. Requires Mg(2+) as cofactor.

The protein localises to the cytoplasm. It carries out the reaction Endonucleolytic cleavage to 5'-phosphomonoester.. Functionally, digests double-stranded RNA. Involved in the processing of primary rRNA transcript to yield the immediate precursors to the large and small rRNAs (23S and 16S). Processes some mRNAs, and tRNAs when they are encoded in the rRNA operon. Processes pre-crRNA and tracrRNA of type II CRISPR loci if present in the organism. This is Ribonuclease 3 from Proteus mirabilis (strain HI4320).